The primary structure comprises 323 residues: Cysteine synthase A (323 aa).

Hydrogen sulfide contacts are provided by asparagine 8 and arginine 35. Lysine 42 carries the post-translational modification N6-(pyridoxal phosphate)lysine. Pyridoxal 5'-phosphate contacts are provided by residues asparagine 72 and 177 to 181 (GTGGT). Leucine 269 contacts hydrogen sulfide. Serine 273 lines the pyridoxal 5'-phosphate pocket.

This sequence belongs to the cysteine synthase/cystathionine beta-synthase family. Homodimer. The cofactor is pyridoxal 5'-phosphate.

The catalysed reaction is O-acetyl-L-serine + hydrogen sulfide = L-cysteine + acetate. It participates in amino-acid biosynthesis; L-cysteine biosynthesis; L-cysteine from L-serine: step 2/2. This Escherichia coli O157:H7 protein is Cysteine synthase A (cysK).